Reading from the N-terminus, the 189-residue chain is Segregation and condensation protein B (189 aa).

It belongs to the ScpB family. Homodimer. Homodimerization may be required to stabilize the binding of ScpA to the Smc head domains. Component of a cohesin-like complex composed of ScpA, ScpB and the Smc homodimer, in which ScpA and ScpB bind to the head domain of Smc. The presence of the three proteins is required for the association of the complex with DNA.

Its subcellular location is the cytoplasm. Functionally, participates in chromosomal partition during cell division. May act via the formation of a condensin-like complex containing Smc and ScpA that pull DNA away from mid-cell into both cell halves. This is Segregation and condensation protein B from Lachnoclostridium phytofermentans (strain ATCC 700394 / DSM 18823 / ISDg) (Clostridium phytofermentans).